A 367-amino-acid chain; its full sequence is CST complex subunit STN1 (367 aa).

The OB DNA-binding region spans 56–154 (VEILGTVIGR…EIRVTTYYKV (99 aa)). Winged helix-turn-helix (wHTH) stretches follow at residues 190–294 (RAFS…YVTR) and 295–367 (EDKE…YTAF).

The protein belongs to the STN1 family. Component of the CST complex, composed of TEN1, CTC1 and STN1. Interacts with TEN1 and CTC1; the interaction is direct. Interacts with ACD/TPP1.

The protein localises to the nucleus. It localises to the chromosome. Its subcellular location is the telomere. Component of the CST complex, a complex that binds to single-stranded DNA and is required to protect telomeres from DNA degradation. The CST complex binds single-stranded DNA with high affinity in a sequence-independent manner, while isolated subunits bind DNA with low affinity by themselves. In addition to telomere protection, the CST complex has probably a more general role in DNA metabolism at non-telomeric sites. The protein is CST complex subunit STN1 of Ailuropoda melanoleuca (Giant panda).